Here is a 1834-residue protein sequence, read N- to C-terminus: MASTLPSTVVCGSQTSPPSRDCLQRIQADLKDPKLKELAKAVDELPEFWSHLVEVKPVLSQVNDAPLKKLKDWAKDESVLNIPEGLPNILLAPLTVIIHLVQYLRFAHSLDANDSQEDQHHRILQSTSKGGFQGLCTGFLSAAALACSRTRSDIWCNATVALRLATCVGAYVDLDRLTYDNTDVHTCMIIHWEDNCGKDQVTEVLKGYPGVYISVELDNRSITVTAKQSQVSLLRGDLAARGAKLTRIPIYGRYHSRTHAEILQDLLEICSNDESLRFPIISAPIVPLRNNTTGGLITSAEKLHELALKCMLTEPADWYSTMSETVSSLMLQPVINEHPLILELGHVSCLPRSLTASANIRAFTPLLTLTASPNEPDASRYDYPEHSIAVIGAACKFTGAETMQQFWELIRAGGTMVGELPEGRIALDKKSLRKPPREEPLRGNFLSRAGHFDHGLFGLSQREARYMDPQQRIALQVAYHAVESSEYFRSGIKDKNVGCYVGVGGSDYDHNVCSHAPTAFSFTGTARAFVSGRISHHFGWTGPSMTIDTACSSSAVAIHQACKDIRMGECRMALAGGVNIISCPNMQQNLAAARFLSPTGGPCRPFDAFADGYCRGEGCGFVMLKKLSCAVADKDEILGVIVGSAANHCDGNDAITVPKSHSQIDLYRKALSLAAMQPKDITYVEAHGTGTSRGDPVECRSIRQVFGGERPTLHFGSVKANVGHTEAASGIAGLLKVLLMIRNQRIPPQANFTQLNSSIPPLEPDNLSITTNELEWKATFRAACVNNYGAAGNNTAVIVCEPPRLKPSAGNNHILSGYPFLITGQSGRSLKMYCTALGEWLENTDAPLSDIAFSVTRRQNRTLRRRITFAARSLKDMKNILGQQARLDQQSSPSPKPKPVVLVFAGQTGNVVYLHKDAYEGSSLLRSHIDECDKILREMGLRGLIAFLFDQQPIEDVVLLHCLFFSLQYACAAAWLDAGLPVQRVIGHSIGQFTAMCISGVTTLADTLKIVAGRARLIQQKWAKERGCMLAIEVDRQGALELARSVPGHKIEVACFNGARNHVLVGTEVAIQTLEAKTSCKTRRLKTTHGFHSELVDHWLDDYMALAQSITYATPIIPIETCSEGGSWKEFTPEMLPRHSREAVYFFDAISRVDKELGPCTWVEGGVGSKGIALVKCALGTNTSGHSFHRLQLDSSEPLASLTDTTIQMWDEGVDVQFWLYHDTEKITFDSCDVPAYQFDETEFWLLRSDQARQSDLQRGRVISDRYKPLVYLLRDEGFRGEPRKLHFGVNQYHPDFDRYLHGREVLGEVLCPVSVFVELAAKAAAICGGRECSTAATQVQVLNLEIHNPLGHAPGARVGLRLKRIGSCKWGFSVISDKDVQSICHATGVISLRQERHGKLEIGPQWSVIQRVIGYSHIQDVLDDSSAISLKEGIIYKVLEKVAEYKPCHRAIKSMTIKGTAAVAQLEMPAISRDSSEITVSDPLVMDQFALIAEVLALCRDDCKRDDVFICSGLSELVTFKSLQSGLGPWTVYTQQTPCGPRELLSDTFVFDSTSKQLIIGLLGARFVRITASSLNGIVKRANLNSQTSELSVETDAVNHPASVAYPPSNNNDTSDILSILSHLLHEITGLPPSEISASTPLMEASVDSLAATELENRIQEEFHLHRPISLYERQFNVGTLCQEIQTQRDDRLARASRTTTATRNTSFSLGRRTSSTESLPDDAEARFISKSAAVLAQLSRMLSESFNITESILPGTELRSLGLDSLVAVELEYDLQQAFGLKVDLMQLSPELTVGGLARLILASESQTSGHIASSMMDCRQTTEGKSQMYLG.

A Starter acyltransferase (SAT) domain is found at 91–255 (LAPLTVIIHL…TRIPIYGRYH (165 aa)). Residues 385–801 (EHSIAVIGAA…GNNTAVIVCE (417 aa)) enclose the Ketosynthase family 3 (KS3) domain. Residues cysteine 551, histidine 687, and histidine 724 each act as for beta-ketoacyl synthase activity in the active site. The Malonyl-CoA:ACP transacylase (MAT) domain maps to 919-1164 (YEGSSLLRSH…KELGPCTWVE (246 aa)). Residues 1269–1398 (PLVYLLRDEG…GVISLRQERH (130 aa)) form an N-terminal hotdog fold region. In terms of domain architecture, PKS/mFAS DH spans 1269–1577 (PLVYLLRDEG…FVRITASSLN (309 aa)). Residues 1269–1577 (PLVYLLRDEG…FVRITASSLN (309 aa)) are product template (PT) domain. Residues 1428 to 1577 (AISLKEGIIY…FVRITASSLN (150 aa)) are C-terminal hotdog fold. In terms of domain architecture, Carrier 1 spans 1616–1690 (SDILSILSHL…TLCQEIQTQR (75 aa)). At serine 1650 the chain carries O-(pantetheine 4'-phosphoryl)serine. Residues 1693–1720 (RLARASRTTTATRNTSFSLGRRTSSTES) are disordered. Over residues 1697–1710 (ASRTTTATRNTSFS) the composition is skewed to low complexity. A Carrier 2 domain is found at 1731–1807 (SKSAAVLAQL…GLARLILASE (77 aa)). O-(pantetheine 4'-phosphoryl)serine is present on serine 1767.

It depends on pantetheine 4'-phosphate as a cofactor.

It carries out the reaction 2 malonyl-CoA + acetyl-CoA + 2 H(+) = triacetate lactone + 2 CO2 + 3 CoA. The protein operates within secondary metabolite biosynthesis; terpenoid biosynthesis. Non-reducing polyketide synthase; part of the gene cluster that mediates the biosynthesis of meroterpenoids called sartorypyrones. The biosynthesis of sartorypyrones begins with the production of triacetic acid lactone (TAL) by the NR-PKS spyA using one molecule of acetyl-CoA and two molecules of malonyl-CoA. As spyA lacks a thioesterase (TE) domain, TAL is likely generated through self-release from spyA by spontaneous lactonization. After production of TAL, the prenyltransferase spyF then conjugates geranylgeranyl pyrophosphate (GGPP) to TAL to form geranylgeranyl-triacetate lactone, for which the pathway-specific geranylgeranyl pyrophosphate synthase (GGPS) spyE is required to provide GGPP. Subsequently, geranylgeranyl-triacetate lactone is epoxidized at the terminal olein by the FAD-dependent monooxygenase spyC, followed by cyclization of the terpenoid component catalyzed by the terpene cyclase spyD to produce both the bicyclic sartorypyrone F and the monocyclic sartorypyrone D. Finally, the last step of the biosynthesis involves the acetylation of the meroterpenoids sartorypyrones D and F by the acetyltransferase SpyB to produce sartorypyrones A and G, respectively. The polypeptide is Non-reducing polyketide synthase spyA (Aspergillus fumigatus (strain ATCC MYA-4609 / CBS 101355 / FGSC A1100 / Af293) (Neosartorya fumigata)).